Reading from the N-terminus, the 303-residue chain is Elongation factor Ts (303 aa).

An involved in Mg(2+) ion dislocation from EF-Tu region spans residues 80–83 (TDFV).

The protein belongs to the EF-Ts family.

The protein localises to the cytoplasm. In terms of biological role, associates with the EF-Tu.GDP complex and induces the exchange of GDP to GTP. It remains bound to the aminoacyl-tRNA.EF-Tu.GTP complex up to the GTP hydrolysis stage on the ribosome. The polypeptide is Elongation factor Ts (Clostridium perfringens (strain ATCC 13124 / DSM 756 / JCM 1290 / NCIMB 6125 / NCTC 8237 / Type A)).